Reading from the N-terminus, the 180-residue chain is Cell wall / vacuolar inhibitor of fructosidase 2 (180 aa).

An N-terminal signal peptide occupies residues M1 to A23. N26 is a glycosylation site (N-linked (GlcNAc...) asparagine). A disulfide bridge connects residues C35 and C44. 2 N-linked (GlcNAc...) asparagine glycosylation sites follow: N73 and N84. An intrachain disulfide couples C101 to C141.

It belongs to the PMEI family. As to expression, mostly expressed at low levels in seedlings, stems, leaves and flowers (in all organs), and, to a lower extent, in roots and siliques.

It is found in the vacuole. Inhibits fructosidases from both cell wall (cell wall invertase CWI) and vacuoles (vacuolar invertase VI). This is Cell wall / vacuolar inhibitor of fructosidase 2 (C/VIF2) from Arabidopsis thaliana (Mouse-ear cress).